Reading from the N-terminus, the 147-residue chain is Ubiquitin-conjugating enzyme E2 D2B (147 aa).

The UBC core domain maps to 1–147 (MALKRIHKEL…AREWTQKYAM (147 aa)). The active-site Glycyl thioester intermediate is the Cys-85.

The protein belongs to the ubiquitin-conjugating enzyme family. Interacts with CNOT4 (via RING domain). Testis-specific. Mainly expressed in the round spermatids (at protein level).

It carries out the reaction S-ubiquitinyl-[E1 ubiquitin-activating enzyme]-L-cysteine + [E2 ubiquitin-conjugating enzyme]-L-cysteine = [E1 ubiquitin-activating enzyme]-L-cysteine + S-ubiquitinyl-[E2 ubiquitin-conjugating enzyme]-L-cysteine.. It functions in the pathway protein modification; protein ubiquitination. In terms of biological role, catalyzes the covalent attachment of ubiquitin to other proteins. Mediates the selective degradation of short-lived and abnormal proteins. Functions in the E6/E6-AP-induced ubiquitination of p53/TP53. Mediates ubiquitination of PEX5 and SQSTM1 and autoubiquitination of STUB1 and TRAF6. Involved in the signal-induced conjugation and subsequent degradation of NFKBIA, FBXW2-mediated GCM1 ubiquitination and degradation, MDM2-dependent degradation of p53/TP53 and the activation of MAVS in the mitochondria by RIGI in response to viral infection Plays a role in early maturation of the testis. The chain is Ubiquitin-conjugating enzyme E2 D2B (Ube2d2b) from Rattus norvegicus (Rat).